We begin with the raw amino-acid sequence, 320 residues long: Biotin synthase 2 (320 aa).

Residues 34–261 (NVVQCSKLLS…ASYVRLSAGR (228 aa)) form the Radical SAM core domain. Residues C49, C53, and C56 each coordinate [4Fe-4S] cluster. [2Fe-2S] cluster is bound by residues C93, C124, C184, and R256.

Belongs to the radical SAM superfamily. Biotin synthase family. Homodimer. [4Fe-4S] cluster is required as a cofactor. [2Fe-2S] cluster serves as cofactor.

It catalyses the reaction (4R,5S)-dethiobiotin + (sulfur carrier)-SH + 2 reduced [2Fe-2S]-[ferredoxin] + 2 S-adenosyl-L-methionine = (sulfur carrier)-H + biotin + 2 5'-deoxyadenosine + 2 L-methionine + 2 oxidized [2Fe-2S]-[ferredoxin]. It participates in cofactor biosynthesis; biotin biosynthesis; biotin from 7,8-diaminononanoate: step 2/2. Functionally, catalyzes the conversion of dethiobiotin (DTB) to biotin by the insertion of a sulfur atom into dethiobiotin via a radical-based mechanism. This chain is Biotin synthase 2, found in Paracoccus denitrificans (strain Pd 1222).